A 213-amino-acid polypeptide reads, in one-letter code: Adenylate kinase (213 aa).

Residue 14–19 coordinates ATP; it reads GSGKGT. Residues 34 to 63 form an NMP region; sequence STGDLLRAIIREGTPNGLKAKAYLDKGAFV. AMP is bound by residues Thr-35, Arg-40, 61–63, 89–92, and Gln-96; these read AFV and GFPR. Residues 129–162 are LID; sequence SRFLCPSCSRIYNTSQGHTECPDCHVPLIRRSDD. Arg-130 contributes to the ATP binding site. Positions 133 and 136 each coordinate Zn(2+). 139 to 140 is a binding site for ATP; the sequence is IY. The Zn(2+) site is built by Cys-149 and Cys-152. Arg-159 and Arg-170 together coordinate AMP. Residue Asn-198 participates in ATP binding.

Belongs to the adenylate kinase family. In terms of assembly, monomer.

It localises to the cytoplasm. It carries out the reaction AMP + ATP = 2 ADP. It functions in the pathway purine metabolism; AMP biosynthesis via salvage pathway; AMP from ADP: step 1/1. In terms of biological role, catalyzes the reversible transfer of the terminal phosphate group between ATP and AMP. Plays an important role in cellular energy homeostasis and in adenine nucleotide metabolism. The polypeptide is Adenylate kinase (Chlamydia pneumoniae (Chlamydophila pneumoniae)).